A 99-amino-acid polypeptide reads, in one-letter code: Seminal vesicle secretory protein 6 (99 aa).

An N-terminal signal peptide occupies residues 1–21; it reads MSPTSFFLLTMLLVLVTETAA.

It belongs to the SVP2/SVP5/SVP6 family. In terms of tissue distribution, testis.

Its subcellular location is the secreted. It is found in the extracellular space. This Mus musculus (Mouse) protein is Seminal vesicle secretory protein 6 (Svs6).